Reading from the N-terminus, the 153-residue chain is Small ribosomal subunit protein bS16 (153 aa).

Over residues 121 to 131 (AEAAAKAKAEA) the composition is skewed to basic and acidic residues. The tract at residues 121–153 (AEAAAKAKAEAEAAAAAEEAPAEEAAEEAPAED) is disordered. Positions 140-153 (APAEEAAEEAPAED) are enriched in acidic residues.

This sequence belongs to the bacterial ribosomal protein bS16 family.

The sequence is that of Small ribosomal subunit protein bS16 from Bifidobacterium longum (strain DJO10A).